We begin with the raw amino-acid sequence, 756 residues long: Receptor-like protein 3 (756 aa).

The first 50 residues, 1 to 50 (MTNEGRFKAKGFVRTSSTTRPIQALSFHMIGILLQCVLFISVLSIAVSEA), serve as a signal peptide directing secretion. An N-cap region spans residues 51–88 (LCNSQDRESLLWFSGNVSSSVSPLNWNPSIDCCSWEGI). Over 51–725 (LCNSQDRESL…ADTEDEEELK (675 aa)) the chain is Extracellular. N-linked (GlcNAc...) asparagine glycosylation occurs at Asn66. 18 LRR repeats span residues 95 to 119 (DSHITAISLPFRALYGKLPLSVLRL), 120 to 143 (HHLSQLNLSHNRLSGHLPSGFLSA), 145 to 169 (DQLKVLDLSYNSLDGELPVEQTFRN), 174 to 199 (CFPIRIVDLSSNFLQGEILPSSIFMQ), 201 to 225 (TFDLISFNVSKNSFTGSIPSFMCKS), 226 to 250 (SPQLSKLDFSYNDFTGNIPQGLGRC), 252 to 274 (KLSVLQAGFNNISGEIPSDIYNL), 275 to 298 (SELEQLFLPVNHLSGKINDDITHL), 299 to 322 (TKLKSLELYSNHLGGEIPMDIGQL), 323 to 346 (SRLQSLQLHINNITGTVPPSLANC), 348 to 370 (NLVKLNLRLNRLEGTLSELDFSR), 371 to 395 (FQSLSILDLGNNSFSGDFPWRVHSC), 397 to 419 (SLSAMRFASNKLTGQISPHVLEL), 420 to 443 (ESLSILSLSDNKLMNITGALGILQ), 445 to 471 (CRNLSTLLIGKNFYNETFPSDKDLISS), 474 to 498 (FPNLQIFASGGSGLRGEIPAWLIKL), 499 to 521 (KSLAVIDLSHNQLVGSIPGWLGT), and 522 to 546 (FPHLFYIDLSENLLSGELPKDLFQL). N-linked (GlcNAc...) asparagine glycans are attached at residues Asn126 and Asn169. The N-linked (GlcNAc...) asparagine glycan is linked to Asn208. Asn262 and Asn273 each carry an N-linked (GlcNAc...) asparagine glycan. N-linked (GlcNAc...) asparagine glycosylation is found at Asn334 and Asn345. N-linked (GlcNAc...) asparagine glycosylation occurs at Asn381. N-linked (GlcNAc...) asparagine glycans are attached at residues Asn434, Asn447, and Asn459. One copy of the LRR 19; degenerate repeat lies at 548 to 569 (ALMSQKAYDATERNYLKLPVFV). LRR repeat units lie at residues 570–593 (SPNNVTTHQQYNQLFSLPPGIYIR), 608–631 (LKVLHVLELSHNYLSGIIPHELSK), 632–656 (LTSLERLDLSNNHLSGRIPWSLTSL), and 658–681 (YMSYFNVVNNSLDGPIPTGSQFDT). An N-linked (GlcNAc...) asparagine glycan is attached at Asn573. The N-linked (GlcNAc...) asparagine glycan is linked to Asn666. Residues 699-725 (LTSCKASTKLPATTTNKADTEDEEELK) form a C-cap/acidic domain region. The helical transmembrane segment at 726 to 746 (FIFILGVATGFFVSYCFYWCF) threads the bilayer. Residues 747–756 (FARLDAFISK) are Cytoplasmic-facing.

The protein belongs to the RLP family. Expressed at very low levels in the shoot apex.

It is found in the cell membrane. Its function is as follows. Involved in the perception of CLV3 and CLV3-like peptides, that act as extracellular signals regulating meristems maintenance. Contributes, with WAKL22/RFO1, to resistance to F.oxysporum (f.) matthioli in cv. Columbia relative to cv. Ty-0. The protein is Receptor-like protein 3 of Arabidopsis thaliana (Mouse-ear cress).